The following is a 270-amino-acid chain: Transcriptional regulator BrlR (270 aa).

3',3'-c-di-GMP is bound at residue M1. The HTH merR-type domain maps to M1 to D71. A DNA-binding region (H-T-H motif) is located at residues I4 to A23. 3',3'-c-di-GMP is bound by residues R31, S34, D35, Y40, R67, R70, R86, and Y270. An involved in effector-binding, probably including pyocyanine-binding region spans residues M120–Y270.

Monomer. Homodimer; dimer formation enhanced in the presence of the second messenger, cyclic di-GMP (c-di-GMP). Homotetramer; dimer of dimers, arranged in a head-to-tail fashion, which may reduce DNA-binding ability. Conformational changes upon binding c-di-GMP or pyocyanine may facilitate DNA binding.

Its function is as follows. Transcriptional regulator. Responsive to the second messenger cyclic di-GMP (c-di-GMP) and to the virulence factor pyocyanine, which both enhance gene expression and promoter DNA binding of BrlR. Activates expression of operons encoding the multidrug efflux pumps MexAB-OprM and MexEF-OprN and several ABC transport systems, acting by direct binding to their respective promoters. Also acts as a repressor of the two component regulatory system, PhoPQ. Binds to promoter of its own gene. Contributes to the antimicrobial tolerance exhibited by biofilms, acting, at least in part, by activating expression of multidrug efflux pumps and ABC transporters. The polypeptide is Transcriptional regulator BrlR (Pseudomonas aeruginosa (strain ATCC 15692 / DSM 22644 / CIP 104116 / JCM 14847 / LMG 12228 / 1C / PRS 101 / PAO1)).